A 306-amino-acid chain; its full sequence is Agmatinase (306 aa).

Mn(2+)-binding residues include H126, D149, H151, D153, D230, and D232.

This sequence belongs to the arginase family. Agmatinase subfamily. Requires Mn(2+) as cofactor.

The enzyme catalyses agmatine + H2O = urea + putrescine. It functions in the pathway amine and polyamine biosynthesis; putrescine biosynthesis via agmatine pathway; putrescine from agmatine: step 1/1. Its function is as follows. Catalyzes the formation of putrescine from agmatine. The polypeptide is Agmatinase (Cronobacter sakazakii (strain ATCC BAA-894) (Enterobacter sakazakii)).